The primary structure comprises 74 residues: DNA-directed RNA polymerase subunit omega (74 aa).

It belongs to the RNA polymerase subunit omega family. In terms of assembly, the RNAP catalytic core consists of 2 alpha, 1 beta, 1 beta' and 1 omega subunit. When a sigma factor is associated with the core the holoenzyme is formed, which can initiate transcription.

The catalysed reaction is RNA(n) + a ribonucleoside 5'-triphosphate = RNA(n+1) + diphosphate. Its function is as follows. Promotes RNA polymerase assembly. Latches the N- and C-terminal regions of the beta' subunit thereby facilitating its interaction with the beta and alpha subunits. The chain is DNA-directed RNA polymerase subunit omega from Lactobacillus acidophilus (strain ATCC 700396 / NCK56 / N2 / NCFM).